The chain runs to 94 residues: Venom peptide SjAPI (94 aa).

A signal peptide spans 1 to 24 (MKWGALLCIFGFLAFCSVLDRGLG). Positions 25–30 (WIPDIW) are excised as a propeptide. Cystine bridges form between cysteine 33-cysteine 70, cysteine 43-cysteine 66, cysteine 47-cysteine 62, cysteine 51-cysteine 92, and cysteine 72-cysteine 86. Residues 33–92 (CSSKNEEFQQCGSSCPETCANHKNPEPKSCAAVCFVGCVCKPGFIRDDLKGSICVKPEDC) form the TIL domain. A protease binding loop region spans residues 63-65 (AAV).

The protein belongs to the serine protease inhibitor-like (TIL domain-containing) family. In terms of tissue distribution, expressed by the venom gland.

It is found in the secreted. Functionally, recombinant protein inhibits both alpha-chymotrypsin (Ki=97.1 nM) and elastase (Ki=3700 nM). In Scorpiops jendeki (Scorpion), this protein is Venom peptide SjAPI.